The primary structure comprises 341 residues: Methionine import ATP-binding protein MetN 2 (341 aa).

One can recognise an ABC transporter domain in the interval 2 to 241; the sequence is ILLENVKKIY…PQQDITKRFV (240 aa). 38 to 45 lines the ATP pocket; it reads GYSGAGKS.

Belongs to the ABC transporter superfamily. Methionine importer (TC 3.A.1.24) family. As to quaternary structure, the complex is composed of two ATP-binding proteins (MetN), two transmembrane proteins (MetI) and a solute-binding protein (MetQ).

Its subcellular location is the cell membrane. The catalysed reaction is L-methionine(out) + ATP + H2O = L-methionine(in) + ADP + phosphate + H(+). The enzyme catalyses D-methionine(out) + ATP + H2O = D-methionine(in) + ADP + phosphate + H(+). In terms of biological role, part of the ABC transporter complex MetNIQ involved in methionine import. Responsible for energy coupling to the transport system. This chain is Methionine import ATP-binding protein MetN 2, found in Bacillus thuringiensis subsp. konkukian (strain 97-27).